Consider the following 506-residue polypeptide: Cysteine--tRNA ligase (506 aa).

Cys-43 contributes to the Zn(2+) binding site. A 'HIGH' region motif is present at residues 45–55 (VTVYDLCHLGH). Zn(2+) contacts are provided by Cys-237, His-262, and Glu-266. The 'KMSKS' region signature appears at 294–298 (KMSKS). Residue Lys-297 participates in ATP binding.

The protein belongs to the class-I aminoacyl-tRNA synthetase family. As to quaternary structure, monomer. Requires Zn(2+) as cofactor.

The protein resides in the cytoplasm. The catalysed reaction is tRNA(Cys) + L-cysteine + ATP = L-cysteinyl-tRNA(Cys) + AMP + diphosphate. In Synechococcus sp. (strain JA-3-3Ab) (Cyanobacteria bacterium Yellowstone A-Prime), this protein is Cysteine--tRNA ligase.